Reading from the N-terminus, the 290-residue chain is Mitochondrial dicarboxylate carrier (290 aa).

3 Solcar repeats span residues 6-90 (TKRL…VKKQ), 101-188 (QKAL…IKQT), and 197-281 (DNLQ…LRLK). Transmembrane regions (helical) follow at residues 12–32 (WYFG…LDLL), 65–84 (GVSA…FGIY), and 103–123 (ALLA…GDLV). K159 carries the post-translational modification N6-acetyllysine. Helical transmembrane passes span 163 to 182 (GATM…LSFY), 203 to 223 (FASS…LDVM), and 256 to 276 (GFIP…IFFE).

The protein belongs to the mitochondrial carrier (TC 2.A.29) family.

The protein resides in the mitochondrion inner membrane. It carries out the reaction (S)-malate(in) + phosphate(out) = (S)-malate(out) + phosphate(in). The enzyme catalyses malonate(out) + (S)-malate(in) = malonate(in) + (S)-malate(out). The catalysed reaction is (S)-malate(in) + succinate(out) = (S)-malate(out) + succinate(in). It catalyses the reaction (S)-malate(in) + sulfate(out) = (S)-malate(out) + sulfate(in). It carries out the reaction 2 thiosulfate(out) + (S)-malate(in) = 2 thiosulfate(in) + (S)-malate(out). The enzyme catalyses malonate(out) + phosphate(in) = malonate(in) + phosphate(out). The catalysed reaction is succinate(out) + phosphate(in) = succinate(in) + phosphate(out). It catalyses the reaction sulfate(out) + phosphate(in) = sulfate(in) + phosphate(out). It carries out the reaction 2 thiosulfate(out) + phosphate(in) = 2 thiosulfate(in) + phosphate(out). The enzyme catalyses malonate(out) + succinate(in) = malonate(in) + succinate(out). Catalyzes the electroneutral exchange or flux of physiologically important metabolites such as dicarboxylates (malonate, malate, succinate), inorganic sulfur-containing anions, and phosphate, across mitochondrial inner membrane. Plays an important role in gluconeogenesis, fatty acid metabolism, urea synthesis, and sulfur metabolism, by supplying the substrates for the different metabolic processes. In Caenorhabditis elegans, this protein is Mitochondrial dicarboxylate carrier.